Consider the following 245-residue polypeptide: MTFLLSRTFISLTLRPSCSISMANLTTNAKTRLRGVVFDMDGTLTVPVIDFAAMYRAVLGEDAYKRIKAESPSGIDILHHIESWSPDKQQKAYEIIADYEKQGIDKLQIMPGTAELCGFLDSKKIKRGLITRNVQKAIDIFHQRFEVIFSPALGREFRPYKPNPDPLLHICSTWDIQPNEVMMVGDSLKDDIACGKRAGAFTCLLDETGRYGPDDFSVSGLQPDFKVDSLSKIQNLLETNFDLNP.

Threonine 2 carries the N-acetylalanine modification. Catalysis depends on aspartate 39, which acts as the Nucleophile. The Mg(2+) site is built by aspartate 39, aspartate 41, and aspartate 186. Aspartate 41 serves as the catalytic Proton donor.

Belongs to the HAD-like hydrolase superfamily. DOG/GPP family. Mg(2+) serves as cofactor.

The protein is Haloacid dehalogenase-like hydrolase domain-containing protein At2g33255 of Arabidopsis thaliana (Mouse-ear cress).